Reading from the N-terminus, the 149-residue chain is SsrA-binding protein (149 aa).

Belongs to the SmpB family.

The protein resides in the cytoplasm. Its function is as follows. Required for rescue of stalled ribosomes mediated by trans-translation. Binds to transfer-messenger RNA (tmRNA), required for stable association of tmRNA with ribosomes. tmRNA and SmpB together mimic tRNA shape, replacing the anticodon stem-loop with SmpB. tmRNA is encoded by the ssrA gene; the 2 termini fold to resemble tRNA(Ala) and it encodes a 'tag peptide', a short internal open reading frame. During trans-translation Ala-aminoacylated tmRNA acts like a tRNA, entering the A-site of stalled ribosomes, displacing the stalled mRNA. The ribosome then switches to translate the ORF on the tmRNA; the nascent peptide is terminated with the 'tag peptide' encoded by the tmRNA and targeted for degradation. The ribosome is freed to recommence translation, which seems to be the essential function of trans-translation. This Mesoplasma florum (strain ATCC 33453 / NBRC 100688 / NCTC 11704 / L1) (Acholeplasma florum) protein is SsrA-binding protein.